We begin with the raw amino-acid sequence, 1190 residues long: Pyruvate-flavodoxin oxidoreductase (1190 aa).

2 4Fe-4S ferredoxin-type domains span residues 687 to 716 and 743 to 773; these read EIPVWDTDVCIQCGKCVMVCPHSVIRSKVY and FTIQVAAEDCTGCGICVDVCPAKNKAQPRKK. Cys696, Cys699, Cys702, Cys706, Cys752, Cys755, Cys758, Cys762, Cys826, Cys829, Cys854, and Cys1089 together coordinate [4Fe-4S] cluster.

Belongs to the pyruvate:ferredoxin/flavodoxin oxidoreductase family. Requires [4Fe-4S] cluster as cofactor.

The catalysed reaction is oxidized [flavodoxin] + pyruvate + CoA + 2 H(+) = reduced [flavodoxin] + acetyl-CoA + CO2. In terms of biological role, oxidoreductase required for the transfer of electrons from pyruvate to flavodoxin, which reduces nitrogenase. In Trichormus variabilis (strain ATCC 29413 / PCC 7937) (Anabaena variabilis), this protein is Pyruvate-flavodoxin oxidoreductase (nifJ).